We begin with the raw amino-acid sequence, 136 residues long: Ribonuclease P protein component (136 aa).

This sequence belongs to the RnpA family. In terms of assembly, consists of a catalytic RNA component (M1 or rnpB) and a protein subunit.

The enzyme catalyses Endonucleolytic cleavage of RNA, removing 5'-extranucleotides from tRNA precursor.. RNaseP catalyzes the removal of the 5'-leader sequence from pre-tRNA to produce the mature 5'-terminus. It can also cleave other RNA substrates such as 4.5S RNA. The protein component plays an auxiliary but essential role in vivo by binding to the 5'-leader sequence and broadening the substrate specificity of the ribozyme. The protein is Ribonuclease P protein component of Arthrobacter sp. (strain FB24).